Here is a 67-residue protein sequence, read N- to C-terminus: Large ribosomal subunit protein uL29 (67 aa).

It belongs to the universal ribosomal protein uL29 family.

The polypeptide is Large ribosomal subunit protein uL29 (Methanosarcina acetivorans (strain ATCC 35395 / DSM 2834 / JCM 12185 / C2A)).